We begin with the raw amino-acid sequence, 267 residues long: Eukaryotic translation initiation factor 3 subunit J (267 aa).

Positions 1–70 are disordered; sequence MSWNDDDVFA…KDKKSSTDQV (70 aa). Residues 24–38 show a composition bias toward acidic residues; that stretch reads WDAEEPIMESWDAEE. Over residues 39–66 the composition is skewed to basic and acidic residues; the sequence is TPAKKETSPKPDSKKNAKKDSKKDKKSS. Residues 192 to 220 adopt a coiled-coil conformation; it reads IESIRQSIATLNVLMKDKEREERRARLAK.

Belongs to the eIF-3 subunit J family. As to quaternary structure, component of the eukaryotic translation initiation factor 3 (eIF-3) complex.

Its subcellular location is the cytoplasm. Component of the eukaryotic translation initiation factor 3 (eIF-3) complex, which is involved in protein synthesis of a specialized repertoire of mRNAs and, together with other initiation factors, stimulates binding of mRNA and methionyl-tRNAi to the 40S ribosome. The eIF-3 complex specifically targets and initiates translation of a subset of mRNAs involved in cell proliferation. The polypeptide is Eukaryotic translation initiation factor 3 subunit J (Vanderwaltozyma polyspora (strain ATCC 22028 / DSM 70294 / BCRC 21397 / CBS 2163 / NBRC 10782 / NRRL Y-8283 / UCD 57-17) (Kluyveromyces polysporus)).